The sequence spans 76 residues: Parvalbumin beta 3 (76 aa).

Ala1 is subject to N-acetylalanine. Positions 31–66 constitute an EF-hand domain; sequence KSPEEVKKFFAIIDQDHSGFIEEEELKLFLQTFSAG. Residues Asp44, Asp46, Ser48, Phe50, Glu52, and Glu55 each contribute to the Ca(2+) site.

It belongs to the parvalbumin family.

Functionally, in muscle, parvalbumin is thought to be involved in relaxation after contraction. It binds two calcium ions. This chain is Parvalbumin beta 3, found in Merluccius polylepis (Southern hake).